The chain runs to 531 residues: Arginine--tRNA ligase (531 aa).

The 'HIGH' region signature appears at 113–123 (ANPTGPLHIGH).

It belongs to the class-I aminoacyl-tRNA synthetase family. In terms of assembly, monomer.

The protein localises to the cytoplasm. The catalysed reaction is tRNA(Arg) + L-arginine + ATP = L-arginyl-tRNA(Arg) + AMP + diphosphate. This Campylobacter lari (strain RM2100 / D67 / ATCC BAA-1060) protein is Arginine--tRNA ligase.